The sequence spans 882 residues: MAYRKRGARRETNLKQDERMQEKEDSKNINNDSPKSQLSEKVLSKKEEIITDNQEEVKISDEVKKSNKEESKQLLEVLKTKEEHQKEVQYEILQKTIPTFEPKESILKKLEDIKPEQAKKQTKLFRIFEPKQLPIYRANGERELRNRWYWKLKRDTLPDGDYDVREYFLNLYDQVLMEMPDYLLLKDMAVENKNSRDAGKVVDSETAAICDAIFQDEETEGAVRRFIAEMRQRVQADRNVVNYPSILHPIDHAFNEYFLQHQLVEPLNNDIIFNYIPERIRNDVNYILNMDRNLPSTARYIRPNLLQDRLNLHDNFESLWDTITTSNYILARSVVPDLKELVSTEAQIQKMSQDLQLEALTIQSETQFLTGINSQAANDCFKTLIAAMLSQRTMSLDFVTTNYMSLISGMWLLTVIPNDMFIRESLVACQLAIINTIVYPAFGMQRMHYRNGDPQTPFQIAEQQIQNFQVANWLHFVNYNQFRQVVIDGVLNQVLNDNIRNGHVVNQLMEALMQLSRQQFPTMPVDYKRSIQRGILLLSNRLGQLVDLTRLLSYNYETLMACITMNMQHVQTLTTEKLQLTSVTSLCMLIGNATVIPSPQTLFHYYNVNVNFHSNYNERINDAVAIITAANRLNLYQKKMKSIVEDFLKRLQIFDVARVPDDQMYRLRDRLRLLPVEIRRLDIFNLIAMNMEQIERASDKIAQGVIIAYRDMQLERDEMYGYVNIARNLDGFQQINLEELMRSGDYAQITNMLLNNQPVALVGALPFITDSSVISLIAKLDATVFAQIVKLRKVDTLKPILYKINSDSNDFYLVANYDWIPTSTTKVYKQVPQQFDFRASMHMLTSNLTFTVYSDLLAFVSADTVEPINAVAFDNMRIMNEL.

The tract at residues 1–47 (MAYRKRGARRETNLKQDERMQEKEDSKNINNDSPKSQLSEKVLSKKE) is disordered. The 5-fold hub; involved in the encapsidation of VP1 and VP3 stretch occupies residues 1 to 82 (MAYRKRGARR…QLLEVLKTKE (82 aa)). Positions 9 to 27 (RRETNLKQDERMQEKEDSK) are enriched in basic and acidic residues. Residues 28–39 (NINNDSPKSQLS) are compositionally biased toward polar residues. Hydrophobic stretches follow at residues 396 to 416 (LDFV…LTVI) and 424 to 444 (ESLV…AFGM).

Belongs to the rotavirus VP2 family. In terms of assembly, homodecamer; each decamer is made up of two conformers of VP2, called VP2A and VP2B. Interacts with a VP1-VP3 complex. Interacts with the intermediate capsid protein VP6. Interacts with NSP5. Interacts (via N-terminus) with NSP2. In terms of processing, sumoylated with SUMO1 and SUMO2. Sumoylation of viral proteins seems to have a positive role on viral replication.

Its subcellular location is the virion. Inner capsid protein that self-assembles to form an icosahedral capsid with a T=2 symmetry, which consists of 120 copies of VP2, with channels at each of its five-fold vertices. This capsid constitutes the innermost concentric layer of the viral mature particle. It encapsidates the polymerase VP1, the capping enzyme VP3 and the genomic dsRNA, thereby defining the core. The innermost VP2 capsid and the intermediate VP6 capsid remain intact following cell entry to protect the dsRNA from degradation and to prevent unfavorable antiviral responses in the host cell during all the replication cycle of the virus. Nascent transcripts are transcribed within the structural confines of this double-layered particle (DLP) and are extruded through the channels formed by VP2 N-termini. VP2 is required for the replicase activity of VP1 polymerase. Probably recruits a copy of a VP1-VP3 complex, potentially along with a segment of plus-strand RNA, as a decamer of VP2 assembles. May activate the autoinhibited VP1/RNA complex to coordinate packaging and genome replication. This chain is Inner capsid protein VP2, found in Chlorocebus pygerythrus (Vervet monkey).